The chain runs to 134 residues: Large ribosomal subunit protein bL20 (134 aa).

It belongs to the bacterial ribosomal protein bL20 family.

Its function is as follows. Binds directly to 23S ribosomal RNA and is necessary for the in vitro assembly process of the 50S ribosomal subunit. It is not involved in the protein synthesizing functions of that subunit. The sequence is that of Large ribosomal subunit protein bL20 from Allorhizobium ampelinum (strain ATCC BAA-846 / DSM 112012 / S4) (Agrobacterium vitis (strain S4)).